The following is a 208-amino-acid chain: Proteasome subunit beta 2 (208 aa).

A propeptide spans 1–9 (MSGKKIVSK) (removed in mature form; by autocatalysis). The active-site Nucleophile is the Thr-10.

It belongs to the peptidase T1B family. As to quaternary structure, the 20S proteasome core is composed of 14 alpha and 14 beta subunits that assemble into four stacked heptameric rings, resulting in a barrel-shaped structure. The two inner rings, each composed of seven catalytic beta subunits, are sandwiched by two outer rings, each composed of seven alpha subunits. The catalytic chamber with the active sites is on the inside of the barrel. Has a gated structure, the ends of the cylinder being occluded by the N-termini of the alpha-subunits. Is capped at one or both ends by the proteasome regulatory ATPase, PAN.

It is found in the cytoplasm. It carries out the reaction Cleavage of peptide bonds with very broad specificity.. Its activity is regulated as follows. The formation of the proteasomal ATPase PAN-20S proteasome complex, via the docking of the C-termini of PAN into the intersubunit pockets in the alpha-rings, triggers opening of the gate for substrate entry. Interconversion between the open-gate and close-gate conformations leads to a dynamic regulation of the 20S proteasome proteolysis activity. Functionally, component of the proteasome core, a large protease complex with broad specificity involved in protein degradation. The chain is Proteasome subunit beta 2 from Staphylothermus marinus (strain ATCC 43588 / DSM 3639 / JCM 9404 / F1).